The following is a 491-amino-acid chain: MYRKSALELRDAVVNREISVTAITEYFYHRIESYDEQIGSFLSLCKERALLRASRIDDKLAKGDPIGILAGIPIGVKDNIHITGVKTTCASKMLENFVAPFDATVVRRIEMEDGILLGKLNMDEFAMGSTTRYSAFQHTNNPWDLERVPGGSSGGSAAAVSARFCPIALGSDTGGSIRQPAAFCGVVGFKPSYGAVSRYGLVAFGSSLDQIGPLTTVVEDVALAMDAFAGRDIKDATTRDFFRGTFSQALSLEVPKLIGVPRGFLDGLQEDCKENFFEALAVMERQGSRIIDIDLSVLKHAVPVYYIVASAEAATNLARFDGVRYGHRCAQADNMQEMYARSRKEGFGKEVTRRILLGNYVLSAERQNIFYKKGTAVRATLIEAFQSAFECCDVIAMPVCASPAIRDTDVLDPVSLYLQDIYTVAVNLAYLPAISVPSGLSKEGLPLGVQFIGKRGADQQICQVGYSFQEHSQIKQLYPKAVNGLFDGGME.

Catalysis depends on charge relay system residues Lys77 and Ser152. Ser176 functions as the Acyl-ester intermediate in the catalytic mechanism.

This sequence belongs to the amidase family. GatA subfamily. As to quaternary structure, heterotrimer of A, B and C subunits.

It catalyses the reaction L-glutamyl-tRNA(Gln) + L-glutamine + ATP + H2O = L-glutaminyl-tRNA(Gln) + L-glutamate + ADP + phosphate + H(+). Its function is as follows. Allows the formation of correctly charged Gln-tRNA(Gln) through the transamidation of misacylated Glu-tRNA(Gln) in organisms which lack glutaminyl-tRNA synthetase. The reaction takes place in the presence of glutamine and ATP through an activated gamma-phospho-Glu-tRNA(Gln). The sequence is that of Glutamyl-tRNA(Gln) amidotransferase subunit A (gatA) from Chlamydia muridarum (strain MoPn / Nigg).